We begin with the raw amino-acid sequence, 83 residues long: MARQMMTVGCLILIVVLLDMMVPVFNTCPGQYDECGNGPEEGECCGTHNYCCKNACTTYHHCHGGRDAGKLLRSLKKLKLTTH.

Residues Met1–Thr27 form the signal peptide.

It belongs to the conopeptide I2-like superfamily. Contains 4 disulfide bonds. Expressed by the venom duct.

It localises to the secreted. Its function is as follows. Acts as a neurotoxin by inhibiting voltage-gated potassium channels (Kv). The polypeptide is Turripeptide Lol11.1 (Iotyrris olangoensis (Sea snail)).